Reading from the N-terminus, the 354-residue chain is NADH-quinone oxidoreductase subunit H (354 aa).

Helical transmembrane passes span 25 to 45, 91 to 111, 126 to 146, 170 to 190, 205 to 225, 257 to 277, 290 to 310, and 330 to 350; these read LVRILVVAVVILLCVAYLILW, WVYLVAPVMVVVPAFAVWAVI, LLYAISISSVGVYGVILAGWA, MGFALVVVMMTAGTMNLSDIV, FLSWNWLPLLPAFVVYFVSGI, LFFLAEYINMIVISALASILF, FIPGIVWLVLKVFLLLSVFIW, and VFLPVTVIWVVVVGFWIMSPL.

It belongs to the complex I subunit 1 family. NDH-1 is composed of 14 different subunits. Subunits NuoA, H, J, K, L, M, N constitute the membrane sector of the complex.

It localises to the cell inner membrane. It catalyses the reaction a quinone + NADH + 5 H(+)(in) = a quinol + NAD(+) + 4 H(+)(out). Functionally, NDH-1 shuttles electrons from NADH, via FMN and iron-sulfur (Fe-S) centers, to quinones in the respiratory chain. The immediate electron acceptor for the enzyme in this species is believed to be ubiquinone. Couples the redox reaction to proton translocation (for every two electrons transferred, four hydrogen ions are translocated across the cytoplasmic membrane), and thus conserves the redox energy in a proton gradient. This subunit may bind ubiquinone. This chain is NADH-quinone oxidoreductase subunit H, found in Paraburkholderia phymatum (strain DSM 17167 / CIP 108236 / LMG 21445 / STM815) (Burkholderia phymatum).